A 336-amino-acid chain; its full sequence is Monoacylglycerol lipase ABHD6 (336 aa).

Residues 1–8 (MDLDVVNM) are Extracellular-facing. A helical; Signal-anchor for type II membrane protein transmembrane segment spans residues 9-29 (FVIAGGTLAIPILAFVASFLL). Residues 30 to 336 (WPSALIRIYY…VHNTDNKKLN (307 aa)) lie on the Cytoplasmic side of the membrane. Residue Ser-148 is the Nucleophile of the active site. Active-site charge relay system residues include Asp-278 and His-306.

The protein belongs to the AB hydrolase superfamily. As to expression, widely expressed with higher expression in small intestine, liver and brown adipose tissue. In brain, expressed postsynaptically in cortical neurons but not detected in microglia (at protein level).

The protein resides in the late endosome membrane. It is found in the lysosome membrane. The protein localises to the mitochondrion membrane. The catalysed reaction is Hydrolyzes glycerol monoesters of long-chain fatty acids.. The enzyme catalyses 2-(5Z,8Z,11Z,14Z-eicosatetraenoyl)-glycerol + H2O = glycerol + (5Z,8Z,11Z,14Z)-eicosatetraenoate + H(+). It catalyses the reaction 1-octanoylglycerol + H2O = octanoate + glycerol + H(+). It carries out the reaction 1-decanoylglycerol + H2O = decanoate + glycerol + H(+). The catalysed reaction is 1-dodecanoylglycerol + H2O = dodecanoate + glycerol + H(+). The enzyme catalyses 1-tetradecanoylglycerol + H2O = tetradecanoate + glycerol + H(+). It catalyses the reaction 2-hexadecanoylglycerol + H2O = glycerol + hexadecanoate + H(+). It carries out the reaction 2-(9Z-octadecenoyl)-glycerol + H2O = glycerol + (9Z)-octadecenoate + H(+). The catalysed reaction is 1-(9Z-octadecenoyl)-glycerol + H2O = glycerol + (9Z)-octadecenoate + H(+). The enzyme catalyses 2-(9Z,12Z-octadecadienoyl)-glycerol + H2O = (9Z,12Z)-octadecadienoate + glycerol + H(+). It catalyses the reaction 1-(5Z,8Z,11Z,14Z-eicosatetraenoyl)-glycerol + H2O = glycerol + (5Z,8Z,11Z,14Z)-eicosatetraenoate + H(+). It carries out the reaction 1-(9Z,12Z-octadecadienoyl)-glycerol + H2O = (9Z,12Z)-octadecadienoate + glycerol + H(+). The catalysed reaction is 3-(9Z-octadecenoyl)-sn-glycero-1-phospho-(3'-(9Z-octadecenoyl)-1'-sn-glycerol) + H2O = 3-(9Z-octadecenoyl)-sn-glycero-1-phospho-(1'-sn-glycerol) + (9Z)-octadecenoate + H(+). The enzyme catalyses (S,S)-2-(9Z-octadecenoyl)-sn-glycero-1-phospho-(2'-(9Z-octadecenoyl)-1'-sn-glycerol) + H2O = (S,S)-2-(9Z-octadecenoyl)-sn-glycero-1-phospho-(1'-sn-glycerol) + (9Z)-octadecenoate + H(+). It catalyses the reaction (R,R)-2-(9Z-octadecenoyl)-sn-glycero-3-phospho-(2'-(9Z-octadecenoyl)-3'-sn-glycerol) + H2O = (R,R)-2-(9Z-octadecenoyl)-sn-glycero-3-phospho-(3'-sn-glycerol) + (9Z)-octadecenoate + H(+). Functionally, lipase that preferentially hydrolysis medium-chain saturated monoacylglycerols including 2-arachidonoylglycerol. Through 2-arachidonoylglycerol degradation may regulate endocannabinoid signaling pathways. Also has a lysophosphatidyl lipase activity with a preference for lysophosphatidylglycerol among other lysophospholipids. Also able to degrade bis(monoacylglycero)phosphate (BMP) and constitutes the major enzyme for BMP catabolism. BMP, also known as lysobisphosphatidic acid, is enriched in late endosomes and lysosomes and plays a key role in the formation of intraluminal vesicles and in lipid sorting. This chain is Monoacylglycerol lipase ABHD6, found in Mus musculus (Mouse).